Here is a 411-residue protein sequence, read N- to C-terminus: Imidazolonepropionase (411 aa).

His78 and His80 together coordinate Fe(3+). Zn(2+) contacts are provided by His78 and His80. 4-imidazolone-5-propanoate contacts are provided by Arg87, Tyr150, and His183. Residue Tyr150 participates in N-formimidoyl-L-glutamate binding. Fe(3+) is bound at residue His248. Zn(2+) is bound at residue His248. Gln251 is a binding site for 4-imidazolone-5-propanoate. Fe(3+) is bound at residue Asp322. Asp322 is a Zn(2+) binding site. 2 residues coordinate N-formimidoyl-L-glutamate: Asn324 and Gly326. Thr327 is a binding site for 4-imidazolone-5-propanoate.

This sequence belongs to the metallo-dependent hydrolases superfamily. HutI family. Zn(2+) is required as a cofactor. Requires Fe(3+) as cofactor.

It is found in the cytoplasm. The catalysed reaction is 4-imidazolone-5-propanoate + H2O = N-formimidoyl-L-glutamate. It functions in the pathway amino-acid degradation; L-histidine degradation into L-glutamate; N-formimidoyl-L-glutamate from L-histidine: step 3/3. Its function is as follows. Catalyzes the hydrolytic cleavage of the carbon-nitrogen bond in imidazolone-5-propanoate to yield N-formimidoyl-L-glutamate. It is the third step in the universal histidine degradation pathway. This is Imidazolonepropionase from Flavobacterium psychrophilum (strain ATCC 49511 / DSM 21280 / CIP 103535 / JIP02/86).